The sequence spans 182 residues: Vacuolar protein sorting-associated protein 29 (182 aa).

Position 50 is an N6-acetyllysine (Lys50).

Belongs to the VPS29 family. In terms of assembly, component of the commander complex consisting of the CCC subcomplex and the retriever subcomplex. Component of the heterotrimeric retriever complex formed by VPS26C, VPS29 and VPS35L; within the complex interacts with VPS35L. Component of the heterotrimeric retromer cargo-selective complex (CSC), also described as vacuolar protein sorting subcomplex (VPS) formed by VPS26 (VPS26A or VPS26B), VPS29 and VPS35. The CSC has a highly elongated structure with VPS26 and VPS29 binding independently at opposite distal ends of VPS35 as central platform. The CSC is believed to associate with variable sorting nexins to form functionally distinct retromer complex variants. The originally described retromer complex (also called SNX-BAR retromer) is a pentamer containing the CSC and a heterodimeric membrane-deforming subcomplex formed between SNX1 or SNX2 and SNX5 or SNX6 (also called SNX-BAR subcomplex); the respective CSC and SNX-BAR subcomplexes associate with low affinity. The CSC associates with SNX3 to form a SNX3-retromer complex. The CSC associates with SNX27, the WASH complex and the SNX-BAR subcomplex to form the SNX27-retromer complex. Interacts with VPS26A, VPS35, SNX1, SNX2, SNX3, SNX27, WASHC5. Interacts with TBC1D5; this interaction is blocked by VPS35L in the retriever complex. Interacts with SNX17; the interaction is indirect; SNX17 (via its C-terminus) interacts with the retriever complex (via VPS26C and VPS35L). Interacts with VPS26B and ANKRD27.

Its subcellular location is the cytoplasm. The protein localises to the membrane. The protein resides in the endosome membrane. In terms of biological role, component of the commander complex that is essential for endosomal recycling of transmembrane cargos; the commander complex is composed of the CCC subcomplex and the retriever subcomplex. Component of the retriever complex, which is a heterotrimeric complex related to retromer cargo-selective complex (CSC) and essential for retromer-independent retrieval and recycling of numerous cargos such as integrin alpha-5/beta-1 (ITGA5:ITGB1). Component of the retromer cargo-selective complex (CSC). The CSC is believed to be the core functional component of retromer or respective retromer complex variants acting to prevent missorting of selected transmembrane cargo proteins into the lysosomal degradation pathway. The recruitment of the CSC to the endosomal membrane involves RAB7A and SNX3. The SNX-BAR retromer mediates retrograde transport of cargo proteins from endosomes to the trans-Golgi network (TGN) and is involved in endosome-to-plasma membrane transport for cargo protein recycling. The SNX3-retromer mediates the retrograde endosome-to-TGN transport of WLS distinct from the SNX-BAR retromer pathway. The SNX27-retromer is believed to be involved in endosome-to-plasma membrane trafficking and recycling of a broad spectrum of cargo proteins. The CSC seems to act as recruitment hub for other proteins, such as the WASH complex and TBC1D5. Required to regulate transcytosis of the polymeric immunoglobulin receptor (pIgR-pIgA). In the endosomes, retriever complex drives the retrieval and recycling of NxxY-motif-containing cargo proteins by coupling to SNX17, a cargo essential for the homeostatic maintenance of numerous cell surface proteins associated with processes that include cell migration, cell adhesion, nutrient supply and cell signaling. The recruitment of the retriever complex to the endosomal membrane involves CCC and WASH complexes. Involved in GLUT1 endosome-to-plasma membrane trafficking; the function is dependent of association with ANKRD27. The chain is Vacuolar protein sorting-associated protein 29 (Vps29) from Mus musculus (Mouse).